A 285-amino-acid chain; its full sequence is Complex I assembly factor TIMMDC1, mitochondrial (285 aa).

The next 4 helical transmembrane spans lie at Ala-80–Ala-100, Arg-137–Tyr-159, Met-165–Val-185, and Leu-188–Ala-208. Residues Arg-265 to His-285 form a disordered region. The span at Arg-274–His-285 shows a compositional bias: polar residues. At Ser-277 the chain carries Phosphoserine.

This sequence belongs to the Tim17/Tim22/Tim23 family. As to quaternary structure, associates with the intermediate 315 kDa subcomplex of incompletely assembled complex I. Interacts with TMEM70.

Its subcellular location is the mitochondrion membrane. Its function is as follows. Chaperone protein involved in the assembly of the mitochondrial NADH:ubiquinone oxidoreductase complex (complex I). Participates in constructing the membrane arm of complex I. This chain is Complex I assembly factor TIMMDC1, mitochondrial, found in Mus musculus (Mouse).